We begin with the raw amino-acid sequence, 274 residues long: 2,3,4,5-tetrahydropyridine-2,6-dicarboxylate N-succinyltransferase (274 aa).

Residues Arg-106 and Asp-143 each coordinate substrate.

The protein belongs to the transferase hexapeptide repeat family. In terms of assembly, homotrimer.

It localises to the cytoplasm. The catalysed reaction is (S)-2,3,4,5-tetrahydrodipicolinate + succinyl-CoA + H2O = (S)-2-succinylamino-6-oxoheptanedioate + CoA. Its pathway is amino-acid biosynthesis; L-lysine biosynthesis via DAP pathway; LL-2,6-diaminopimelate from (S)-tetrahydrodipicolinate (succinylase route): step 1/3. This Rickettsia akari (strain Hartford) protein is 2,3,4,5-tetrahydropyridine-2,6-dicarboxylate N-succinyltransferase.